Reading from the N-terminus, the 251-residue chain is Probable transcriptional regulatory protein jk1057 (251 aa).

The tract at residues 1–22 is disordered; sequence MAGHSKWATTKHKKAANDAKRG.

The protein belongs to the TACO1 family.

Its subcellular location is the cytoplasm. The chain is Probable transcriptional regulatory protein jk1057 from Corynebacterium jeikeium (strain K411).